Reading from the N-terminus, the 189-residue chain is Phomopsin biosynthesis cluster protein C' (189 aa).

It belongs to the oryJ family.

In terms of biological role, part of the gene cluster that mediates the biosynthesis of the phomopsins, a group of hexapeptide mycotoxins which infects lupins and causes lupinosis disease in livestock. The role of phomC' within the phomopsins biosynthesis pathway has still to be determined. The pathway starts with the processing of the precursor phomA by several endopeptidases including kexin proteases as well as the cluster-specific S41 family peptidase phomP1 and the oligopeptidase phomG to produce 10 identical copies of the hexapeptide Tyr-Val-Ile-Pro-Ile-Asp. After being excised from the precursor peptide, the core peptides are cyclized and modified post-translationally by enzymes encoded within the gene cluster. The timing and order of proteolysis of the phomA precursor and PTMs are still unknown. Two tyrosinase-like enzymes, phomQ1 and phomQ2, catalyze the chlorination and hydroxylation of Tyr, respectively. PhomYb, is proposed to be involved in the construction of the macrocyclic structure. The other 4 ustYa family proteins may be involved in PTMs that generate the unique structure of phomopsin A. PhomYa is required for the hydroxylation of C-beta of Tyr. PhomYc, phomYd, and phomYe are responsible for the biosynthesis of 2,3-dehydroisoleucine (dIle), 2,3-dehydroaspartic acid (dAsp), and 3,4-dehydroproline (dPro), respectively. While dIle formation by phomYc is indispensable for the installation of dAsp by phomYd, the order of the other PTMs have not been elucidated yet. Most of the biosynthetic enzymes likely have broad substrate specificity, and thus, there might be a metabolic grid from a precursor to phomopsin A. The enzyme(s) responsible for the biosynthesis of 3,4-dehydrovaline (dVal) have also not been identified yet. Finally, phomM acts as an S-adenosylmethionine-dependent alpha-N-methyltransferase that catalyzes two successive N-methylation reactions, converting N-desmethyl-phomopsin A to phomopsin A and phomopsin A further to an N,N-dimethylated congener called phomopsin E. This Diaporthe leptostromiformis (Lupinosis disease fungus) protein is Phomopsin biosynthesis cluster protein C'.